An 82-amino-acid chain; its full sequence is Large ribosomal subunit protein bL31B-2 (82 aa).

This sequence belongs to the bacterial ribosomal protein bL31 family. Type B subfamily. As to quaternary structure, part of the 50S ribosomal subunit.

This is Large ribosomal subunit protein bL31B-2 from Streptomyces avermitilis (strain ATCC 31267 / DSM 46492 / JCM 5070 / NBRC 14893 / NCIMB 12804 / NRRL 8165 / MA-4680).